We begin with the raw amino-acid sequence, 75 residues long: Small ribosomal subunit protein bS18 (75 aa).

This sequence belongs to the bacterial ribosomal protein bS18 family. As to quaternary structure, part of the 30S ribosomal subunit. Forms a tight heterodimer with protein bS6.

Functionally, binds as a heterodimer with protein bS6 to the central domain of the 16S rRNA, where it helps stabilize the platform of the 30S subunit. In Aliivibrio fischeri (strain ATCC 700601 / ES114) (Vibrio fischeri), this protein is Small ribosomal subunit protein bS18.